The chain runs to 198 residues: MEHYISLFVKAVFIENMALSFFLGMCTFLAVSKKVSTAFGLGIAVTFVLGIAVPVNQLIYANVLKENALIEGVDLSFLNFITFIGVIAGLVQILEMVLDKFMPSLYNALGIFLPLIAVNCAIFGGVSFMVQRDYNFPESIVYGFGSGLGWMLAIVALAGLTEKMKYADIPAGLKGLGITFISVGLMALGFMSFSGIQL.

Helical transmembrane passes span Ala11–Val31, Val35–Val55, Phe77–Val97, Gly110–Val130, Ile140–Leu160, and Leu176–Ile196.

Belongs to the NqrDE/RnfAE family. Composed of six subunits; NqrA, NqrB, NqrC, NqrD, NqrE and NqrF.

The protein localises to the cell inner membrane. The enzyme catalyses a ubiquinone + n Na(+)(in) + NADH + H(+) = a ubiquinol + n Na(+)(out) + NAD(+). NQR complex catalyzes the reduction of ubiquinone-1 to ubiquinol by two successive reactions, coupled with the transport of Na(+) ions from the cytoplasm to the periplasm. NqrA to NqrE are probably involved in the second step, the conversion of ubisemiquinone to ubiquinol. This chain is Na(+)-translocating NADH-quinone reductase subunit E, found in Haemophilus influenzae (strain 86-028NP).